An 89-amino-acid chain; its full sequence is Large ribosomal subunit protein eL34 (89 aa).

Residues 45 to 71 (GIPRGRPVEMRKLPKTKKRPERPMPHL) form a disordered region.

This sequence belongs to the eukaryotic ribosomal protein eL34 family. Part of the 50S ribosomal subunit.

This chain is Large ribosomal subunit protein eL34, found in Pyrococcus furiosus (strain ATCC 43587 / DSM 3638 / JCM 8422 / Vc1).